Here is a 179-residue protein sequence, read N- to C-terminus: Large ribosomal subunit protein uL6 (179 aa).

The protein belongs to the universal ribosomal protein uL6 family. In terms of assembly, part of the 50S ribosomal subunit.

This protein binds to the 23S rRNA, and is important in its secondary structure. It is located near the subunit interface in the base of the L7/L12 stalk, and near the tRNA binding site of the peptidyltransferase center. In Clostridium novyi (strain NT), this protein is Large ribosomal subunit protein uL6.